A 161-amino-acid polypeptide reads, in one-letter code: Arginine repressor (161 aa).

The protein belongs to the ArgR family.

The protein resides in the cytoplasm. The protein operates within amino-acid biosynthesis; L-arginine biosynthesis [regulation]. In terms of biological role, regulates arginine biosynthesis genes. This Corynebacterium aurimucosum (strain ATCC 700975 / DSM 44827 / CIP 107346 / CN-1) (Corynebacterium nigricans) protein is Arginine repressor.